A 235-amino-acid polypeptide reads, in one-letter code: Ribosomal RNA large subunit methyltransferase E (235 aa).

Residues Gly-76, Trp-78, Asp-99, Asp-115, and Asp-139 each coordinate S-adenosyl-L-methionine. Lys-179 acts as the Proton acceptor in catalysis.

It belongs to the class I-like SAM-binding methyltransferase superfamily. RNA methyltransferase RlmE family.

The protein localises to the cytoplasm. It carries out the reaction uridine(2552) in 23S rRNA + S-adenosyl-L-methionine = 2'-O-methyluridine(2552) in 23S rRNA + S-adenosyl-L-homocysteine + H(+). In terms of biological role, specifically methylates the uridine in position 2552 of 23S rRNA at the 2'-O position of the ribose in the fully assembled 50S ribosomal subunit. This is Ribosomal RNA large subunit methyltransferase E from Rhodopseudomonas palustris (strain BisA53).